The sequence spans 332 residues: Mediator of RNA polymerase II transcription subunit 3 (332 aa).

2 disordered regions span residues 125-206 (EPVR…PGAT) and 221-242 (SPLNGISPSRKPAQPHHQTTPS). The span at 132–143 (SPSYRRPSNRSS) shows a compositional bias: low complexity. Over residues 144 to 153 (ADTPSSNAPT) the composition is skewed to polar residues. 2 stretches are compositionally biased toward low complexity: residues 155–166 (SAAVVSGAALVA) and 184–200 (PSVSASVVPSANSSGPA).

It belongs to the Mediator complex subunit 3 family. As to quaternary structure, component of the Mediator complex.

It is found in the nucleus. Functionally, component of the Mediator complex, a coactivator involved in regulated gene transcription of nearly all RNA polymerase II-dependent genes. Mediator functions as a bridge to convey information from gene-specific regulatory proteins to the basal RNA polymerase II transcription machinery. Mediator is recruited to promoters by direct interactions with regulatory proteins and serves as a scaffold for the assembly of a functional preinitiation complex with RNA polymerase II and the general transcription factors. The sequence is that of Mediator of RNA polymerase II transcription subunit 3 (PGD1) from Eremothecium gossypii (strain ATCC 10895 / CBS 109.51 / FGSC 9923 / NRRL Y-1056) (Yeast).